Here is a 440-residue protein sequence, read N- to C-terminus: Glutamyl-tRNA reductase (440 aa).

Substrate contacts are provided by residues 50-53, serine 109, 114-116, and glutamine 120; these read TCNR and EPQ. The active-site Nucleophile is cysteine 51. 189–194 provides a ligand contact to NADP(+); the sequence is GAGEMA.

This sequence belongs to the glutamyl-tRNA reductase family. In terms of assembly, homodimer.

It catalyses the reaction (S)-4-amino-5-oxopentanoate + tRNA(Glu) + NADP(+) = L-glutamyl-tRNA(Glu) + NADPH + H(+). Its pathway is porphyrin-containing compound metabolism; protoporphyrin-IX biosynthesis; 5-aminolevulinate from L-glutamyl-tRNA(Glu): step 1/2. Its function is as follows. Catalyzes the NADPH-dependent reduction of glutamyl-tRNA(Glu) to glutamate 1-semialdehyde (GSA). The polypeptide is Glutamyl-tRNA reductase (Nitratidesulfovibrio vulgaris (strain ATCC 29579 / DSM 644 / CCUG 34227 / NCIMB 8303 / VKM B-1760 / Hildenborough) (Desulfovibrio vulgaris)).